The following is a 365-amino-acid chain: 3-isopropylmalate dehydrogenase (365 aa).

80–91 is an NAD(+) binding site; that stretch reads GPKWGTGEVRPE. Substrate-binding residues include Arg-98, Arg-108, Arg-137, and Asp-226. 3 residues coordinate Mg(2+): Asp-226, Asp-251, and Asp-255. 290–301 lines the NAD(+) pocket; it reads GSAPDLPKNKVN.

This sequence belongs to the isocitrate and isopropylmalate dehydrogenases family. As to quaternary structure, homodimer. Requires Mg(2+) as cofactor. Mn(2+) serves as cofactor.

The protein resides in the cytoplasm. The enzyme catalyses (2R,3S)-3-isopropylmalate + NAD(+) = 4-methyl-2-oxopentanoate + CO2 + NADH. It functions in the pathway amino-acid biosynthesis; L-leucine biosynthesis; L-leucine from 3-methyl-2-oxobutanoate: step 3/4. Catalyzes the oxidation of 3-carboxy-2-hydroxy-4-methylpentanoate (3-isopropylmalate) to 3-carboxy-4-methyl-2-oxopentanoate. The product decarboxylates to 4-methyl-2 oxopentanoate. This Candida boidinii (Yeast) protein is 3-isopropylmalate dehydrogenase (LEU2).